Consider the following 113-residue polypeptide: uncharacterized protein (113 aa).

This is an uncharacterized protein from Methanocaldococcus jannaschii (strain ATCC 43067 / DSM 2661 / JAL-1 / JCM 10045 / NBRC 100440) (Methanococcus jannaschii).